Consider the following 212-residue polypeptide: Orotate phosphoribosyltransferase (212 aa).

5-phospho-alpha-D-ribose 1-diphosphate-binding positions include Arg-97, Lys-101, His-103, and 123 to 131 (EDLISTGGS). Position 127 (Ser-127) interacts with orotate.

This sequence belongs to the purine/pyrimidine phosphoribosyltransferase family. PyrE subfamily. In terms of assembly, homodimer. Mg(2+) serves as cofactor.

The enzyme catalyses orotidine 5'-phosphate + diphosphate = orotate + 5-phospho-alpha-D-ribose 1-diphosphate. It functions in the pathway pyrimidine metabolism; UMP biosynthesis via de novo pathway; UMP from orotate: step 1/2. Its function is as follows. Catalyzes the transfer of a ribosyl phosphate group from 5-phosphoribose 1-diphosphate to orotate, leading to the formation of orotidine monophosphate (OMP). This is Orotate phosphoribosyltransferase from Bacteroides fragilis (strain ATCC 25285 / DSM 2151 / CCUG 4856 / JCM 11019 / LMG 10263 / NCTC 9343 / Onslow / VPI 2553 / EN-2).